The sequence spans 631 residues: Glutamyl-tRNA(Gln) amidotransferase subunit E (631 aa).

It belongs to the GatB/GatE family. GatE subfamily. In terms of assembly, heterodimer of GatD and GatE.

The enzyme catalyses L-glutamyl-tRNA(Gln) + L-glutamine + ATP + H2O = L-glutaminyl-tRNA(Gln) + L-glutamate + ADP + phosphate + H(+). Its function is as follows. Allows the formation of correctly charged Gln-tRNA(Gln) through the transamidation of misacylated Glu-tRNA(Gln) in organisms which lack glutaminyl-tRNA synthetase. The reaction takes place in the presence of glutamine and ATP through an activated gamma-phospho-Glu-tRNA(Gln). The GatDE system is specific for glutamate and does not act on aspartate. This chain is Glutamyl-tRNA(Gln) amidotransferase subunit E, found in Methanococcus maripaludis (strain C5 / ATCC BAA-1333).